The chain runs to 139 residues: D-ribose pyranase (139 aa).

His20 acts as the Proton donor in catalysis. Residues Asp28, His106, and 128–130 (YAN) contribute to the substrate site.

It belongs to the RbsD / FucU family. RbsD subfamily. In terms of assembly, homodecamer.

Its subcellular location is the cytoplasm. The catalysed reaction is beta-D-ribopyranose = beta-D-ribofuranose. Its pathway is carbohydrate metabolism; D-ribose degradation; D-ribose 5-phosphate from beta-D-ribopyranose: step 1/2. Catalyzes the interconversion of beta-pyran and beta-furan forms of D-ribose. This is D-ribose pyranase from Serratia proteamaculans (strain 568).